Consider the following 142-residue polypeptide: Hemoglobin subunit beta (142 aa).

Residues 3–142 enclose the Globin domain; that stretch reads KLSEDQEHYI…VAEALSSNYH (140 aa). Positions 60 and 89 each coordinate heme b.

The protein belongs to the globin family. Heterotetramer of two alpha chains and two beta chains. In terms of tissue distribution, red blood cells.

Functionally, involved in oxygen transport from gills to the various peripheral tissues. The chain is Hemoglobin subunit beta (HBB) from Hemitrygon akajei (Red stingray).